Here is a 1755-residue protein sequence, read N- to C-terminus: Transposon Ty1-DR1 Gag-Pol polyprotein (1755 aa).

Composition is skewed to polar residues over residues 1-10, 48-60, and 127-152; these read MESQQLSNYP, TKAN…TPAS, and QSQF…GNTF. 3 disordered regions span residues 1–93, 126–173, and 352–421; these read MESQ…MMTQ, PQSQ…RPPP, and GSRN…SKST. Residues 153–165 are compositionally biased toward low complexity; that stretch reads TDSSSADSDMTST. The tract at residues 299 to 401 is RNA-binding; sequence NNGIHINNKV…NSKSKTARAH (103 aa). The span at 402-418 shows a compositional bias: low complexity; it reads NVSTSNNSPSTDNDSIS. Ser416 is modified (phosphoserine). Asp461 (for protease activity; shared with dimeric partner) is an active-site residue. The segment at 583–640 is integrase-type zinc finger-like; the sequence is NVHTSESTRKYPYPFIHRMLAHANAQTIRYSLKNNTITYFNESDVDWSSAIDYQCPDC. An Integrase catalytic domain is found at 660-835; that stretch reads NSYEPFQYLH…AGLDISTLLP (176 aa). 2 residues coordinate Mg(2+): Asp671 and Asp736. 3 disordered regions span residues 956 to 1087, 1092 to 1111, and 1130 to 1187; these read SKAV…ETEK, RSPS…NIVP, and DLPL…DNET. Over residues 960-969 the composition is skewed to low complexity; it reads SPTDSTPPST. The segment covering 1005 to 1015 has biased composition (polar residues); that stretch reads STPQISNIEST. Residues 1038–1053 are compositionally biased toward basic and acidic residues; sequence ESSHASKSKDFRHSDS. 2 stretches are compositionally biased toward polar residues: residues 1054–1082 and 1101–1111; these read YSEN…QISD and PENNSSHNIVP. Residues 1178 to 1212 carry the Bipartite nuclear localization signal motif; the sequence is KKRSLEDNETEIKVSRDTWNTKNMRSLEPPRSKKR. In terms of domain architecture, Reverse transcriptase Ty1/copia-type spans 1338–1476; the sequence is NNYYITQLDI…DILGLEIKYQ (139 aa). Mg(2+) is bound by residues Asp1346, Asp1427, Asp1428, Asp1610, Glu1652, and Asp1685. In terms of domain architecture, RNase H Ty1/copia-type spans 1610–1752; it reads DASYGNQPYY…IKTFKLLTNK (143 aa).

As to quaternary structure, the capsid protein forms a homotrimer, from which the VLPs are assembled. The protease is a homodimer, whose active site consists of two apposed aspartic acid residues. In terms of processing, initially, virus-like particles (VLPs) are composed of the structural unprocessed proteins Gag and Gag-Pol, and also contain the host initiator methionine tRNA (tRNA(i)-Met) which serves as a primer for minus-strand DNA synthesis, and a dimer of genomic Ty RNA. Processing of the polyproteins occurs within the particle and proceeds by an ordered pathway, called maturation. First, the protease (PR) is released by autocatalytic cleavage of the Gag-Pol polyprotein yielding capsid protein p45 and a Pol-p154 precursor protein. This cleavage is a prerequisite for subsequent processing of Pol-p154 at the remaining sites to release the mature structural and catalytic proteins. Maturation takes place prior to the RT reaction and is required to produce transposition-competent VLPs.

It localises to the cytoplasm. The protein localises to the nucleus. It carries out the reaction DNA(n) + a 2'-deoxyribonucleoside 5'-triphosphate = DNA(n+1) + diphosphate. It catalyses the reaction Endonucleolytic cleavage to 5'-phosphomonoester.. Capsid protein (CA) is the structural component of the virus-like particle (VLP), forming the shell that encapsulates the retrotransposons dimeric RNA genome. The particles are assembled from trimer-clustered units and there are holes in the capsid shells that allow for the diffusion of macromolecules. CA also has nucleocapsid-like chaperone activity, promoting primer tRNA(i)-Met annealing to the multipartite primer-binding site (PBS), dimerization of Ty1 RNA and initiation of reverse transcription. Its function is as follows. The aspartyl protease (PR) mediates the proteolytic cleavages of the Gag and Gag-Pol polyproteins after assembly of the VLP. Functionally, reverse transcriptase/ribonuclease H (RT) is a multifunctional enzyme that catalyzes the conversion of the retro-elements RNA genome into dsDNA within the VLP. The enzyme displays a DNA polymerase activity that can copy either DNA or RNA templates, and a ribonuclease H (RNase H) activity that cleaves the RNA strand of RNA-DNA heteroduplexes during plus-strand synthesis and hydrolyzes RNA primers. The conversion leads to a linear dsDNA copy of the retrotransposon that includes long terminal repeats (LTRs) at both ends. In terms of biological role, integrase (IN) targets the VLP to the nucleus, where a subparticle preintegration complex (PIC) containing at least integrase and the newly synthesized dsDNA copy of the retrotransposon must transit the nuclear membrane. Once in the nucleus, integrase performs the integration of the dsDNA into the host genome. This chain is Transposon Ty1-DR1 Gag-Pol polyprotein (TY1B-DR1), found in Saccharomyces cerevisiae (strain ATCC 204508 / S288c) (Baker's yeast).